Here is an 89-residue protein sequence, read N- to C-terminus: Small ribosomal subunit protein uS15 (89 aa).

Belongs to the universal ribosomal protein uS15 family. In terms of assembly, part of the 30S ribosomal subunit. Forms a bridge to the 50S subunit in the 70S ribosome, contacting the 23S rRNA.

Functionally, one of the primary rRNA binding proteins, it binds directly to 16S rRNA where it helps nucleate assembly of the platform of the 30S subunit by binding and bridging several RNA helices of the 16S rRNA. In terms of biological role, forms an intersubunit bridge (bridge B4) with the 23S rRNA of the 50S subunit in the ribosome. This is Small ribosomal subunit protein uS15 from Photorhabdus laumondii subsp. laumondii (strain DSM 15139 / CIP 105565 / TT01) (Photorhabdus luminescens subsp. laumondii).